The primary structure comprises 431 residues: Adenylosuccinate synthetase 2 (431 aa).

Residues Gly13 to Lys19 and Gly41 to Thr43 each bind GTP. Asp14 functions as the Proton acceptor in the catalytic mechanism. Positions 14 and 41 each coordinate Mg(2+). IMP is bound by residues Asp14–Lys17, Asn39–His42, Thr130, Arg144, Gln225, Thr240, and Arg304. His42 functions as the Proton donor in the catalytic mechanism. Ser300–Arg306 serves as a coordination point for substrate. Residues Arg306, Lys332–Asp334, and Ser414–Gly416 each bind GTP.

Belongs to the adenylosuccinate synthetase family. Homodimer. The cofactor is Mg(2+).

The protein resides in the cytoplasm. The catalysed reaction is IMP + L-aspartate + GTP = N(6)-(1,2-dicarboxyethyl)-AMP + GDP + phosphate + 2 H(+). Its pathway is purine metabolism; AMP biosynthesis via de novo pathway; AMP from IMP: step 1/2. In terms of biological role, plays an important role in the de novo pathway of purine nucleotide biosynthesis. Catalyzes the first committed step in the biosynthesis of AMP from IMP. This chain is Adenylosuccinate synthetase 2, found in Chromobacterium violaceum (strain ATCC 12472 / DSM 30191 / JCM 1249 / CCUG 213 / NBRC 12614 / NCIMB 9131 / NCTC 9757 / MK).